Here is a 381-residue protein sequence, read N- to C-terminus: UDP-N-acetylglucosamine--N-acetylmuramyl-(pentapeptide) pyrophosphoryl-undecaprenol N-acetylglucosamine transferase (381 aa).

UDP-N-acetyl-alpha-D-glucosamine-binding positions include 10–12 (TGG), asparagine 124, arginine 165, serine 207, isoleucine 263, and glutamine 308.

It belongs to the glycosyltransferase 28 family. MurG subfamily.

The protein resides in the cell inner membrane. The enzyme catalyses di-trans,octa-cis-undecaprenyl diphospho-N-acetyl-alpha-D-muramoyl-L-alanyl-D-glutamyl-meso-2,6-diaminopimeloyl-D-alanyl-D-alanine + UDP-N-acetyl-alpha-D-glucosamine = di-trans,octa-cis-undecaprenyl diphospho-[N-acetyl-alpha-D-glucosaminyl-(1-&gt;4)]-N-acetyl-alpha-D-muramoyl-L-alanyl-D-glutamyl-meso-2,6-diaminopimeloyl-D-alanyl-D-alanine + UDP + H(+). The protein operates within cell wall biogenesis; peptidoglycan biosynthesis. Cell wall formation. Catalyzes the transfer of a GlcNAc subunit on undecaprenyl-pyrophosphoryl-MurNAc-pentapeptide (lipid intermediate I) to form undecaprenyl-pyrophosphoryl-MurNAc-(pentapeptide)GlcNAc (lipid intermediate II). This Trichlorobacter lovleyi (strain ATCC BAA-1151 / DSM 17278 / SZ) (Geobacter lovleyi) protein is UDP-N-acetylglucosamine--N-acetylmuramyl-(pentapeptide) pyrophosphoryl-undecaprenol N-acetylglucosamine transferase.